The chain runs to 202 residues: Protein DCV1 (202 aa).

A signal peptide spans 1–18 (MLNYKLILLFSSFLQLIS). Transmembrane regions (helical) follow at residues 91–107 (IGGL…LTFI), 137–155 (ILTL…LLCM), and 168–189 (LVWL…FLSF).

It is found in the membrane. The polypeptide is Protein DCV1 (DCV1) (Saccharomyces cerevisiae (strain ATCC 204508 / S288c) (Baker's yeast)).